A 132-amino-acid chain; its full sequence is MPFKTKYPNGFHFAYLPTGSTQFRSLLQGQDSASQGVCPCRLCGAVPVRDQARIQSRRITLANCQGQPSALRQVNELANSAQIESFLCFSQLPNAVCFGGHLSCEFRECGYCNINPHHSKQLKLNSVTREES.

This is an uncharacterized protein from Homo sapiens (Human).